The primary structure comprises 660 residues: Interferon-induced GTP-binding protein Mx1 (660 aa).

At methionine 1 the chain carries N-acetylmethionine. A compositionally biased stretch (basic and acidic residues) spans 1 to 10 (MVHSEAKMTR). Residues 1–29 (MVHSEAKMTRPDSASASKQQLLNGNADIQ) are disordered. Over residues 12-29 (DSASASKQQLLNGNADIQ) the composition is skewed to polar residues. A Dynamin-type G domain is found at 67–340 (DLALPAIAVI…LITHISKSLP (274 aa)). Residues 77-84 (GDQSSGKS) are G1 motif. 77–84 (GDQSSGKS) contributes to the GTP binding site. The interval 102 to 104 (VTR) is G2 motif. The segment at 178–181 (DLPG) is G3 motif. Residues 178–182 (DLPGI) and 247–250 (TKPD) contribute to the GTP site. The G4 motif stretch occupies residues 247-250 (TKPD). The interval 279 to 282 (KCRG) is G5 motif. A bundle signaling element (BSE) region spans residues 341–366 (LLENQIKESYQNLSDELQKYGTDIPE). The segment at 366–533 (EDETEKTFFL…HFQMEKIVYC (168 aa)) is middle domain. The stalk stretch occupies residues 367-630 (DETEKTFFLI…RDTYDWLLKE (264 aa)). The interval 554-557 (KKKK) is critical for lipid-binding. The 89-residue stretch at 572 to 660 (MAEILEHLNA…ARRRLAKFPG (89 aa)) folds into the GED domain.

The protein belongs to the TRAFAC class dynamin-like GTPase superfamily. Dynamin/Fzo/YdjA family. Homooligomer. Oligomerizes into multimeric filamentous or ring-like structures by virtue of its stalk domain. Oligomerization is critical for GTPase activity, protein stability, and recognition of viral target structures. Interacts with TRPC1, TRPC3, TRPC4, TRPC5, TRPC6 and TRPC7. Interacts with HSPA5. Interacts with TUBB/TUBB5. Interacts with DDX39A and DDX39B. In terms of processing, ISGylated.

Its subcellular location is the cytoplasm. The protein resides in the endoplasmic reticulum membrane. The protein localises to the perinuclear region. Functionally, interferon-induced dynamin-like GTPase with antiviral activity. In Equus caballus (Horse), this protein is Interferon-induced GTP-binding protein Mx1 (MX1).